The primary structure comprises 286 residues: 4-hydroxybenzoate octaprenyltransferase (286 aa).

A run of 8 helical transmembrane segments spans residues 20–40 (IGTF…AGGM), 43–63 (LKVL…GCII), 95–115 (ILFV…NPLV), 116–136 (VQLS…KRFT), 142–162 (FLGV…LGTV), 167–187 (WWLF…YAMV), 210–230 (QIIG…GLSA), and 235–255 (VFAL…KLIF).

This sequence belongs to the UbiA prenyltransferase family. The cofactor is Mg(2+).

Its subcellular location is the cell inner membrane. It carries out the reaction all-trans-octaprenyl diphosphate + 4-hydroxybenzoate = 4-hydroxy-3-(all-trans-octaprenyl)benzoate + diphosphate. It functions in the pathway cofactor biosynthesis; ubiquinone biosynthesis. Functionally, catalyzes the prenylation of para-hydroxybenzoate (PHB) with an all-trans polyprenyl group. Mediates the second step in the final reaction sequence of ubiquinone-8 (UQ-8) biosynthesis, which is the condensation of the polyisoprenoid side chain with PHB, generating the first membrane-bound Q intermediate 3-octaprenyl-4-hydroxybenzoate. In Shewanella loihica (strain ATCC BAA-1088 / PV-4), this protein is 4-hydroxybenzoate octaprenyltransferase.